Reading from the N-terminus, the 133-residue chain is ATP synthase epsilon chain, chloroplastic (133 aa).

Belongs to the ATPase epsilon chain family. As to quaternary structure, F-type ATPases have 2 components, CF(1) - the catalytic core - and CF(0) - the membrane proton channel. CF(1) has five subunits: alpha(3), beta(3), gamma(1), delta(1), epsilon(1). CF(0) has three main subunits: a, b and c.

The protein localises to the plastid. The protein resides in the chloroplast thylakoid membrane. In terms of biological role, produces ATP from ADP in the presence of a proton gradient across the membrane. The sequence is that of ATP synthase epsilon chain, chloroplastic from Piper cenocladum (Ant piper).